The chain runs to 74 residues: uncharacterized protein (74 aa).

This is an uncharacterized protein from Treponema pallidum (strain Nichols).